The following is a 168-amino-acid chain: 6,7-dimethyl-8-ribityllumazine synthase (168 aa).

5-amino-6-(D-ribitylamino)uracil contacts are provided by residues Phe-24, 58–60 (ALE), and 82–84 (AVI). Position 87 to 88 (87 to 88 (ET)) interacts with (2S)-2-hydroxy-3-oxobutyl phosphate. The Proton donor role is filled by His-90. Asn-115 contacts 5-amino-6-(D-ribitylamino)uracil. Arg-129 contributes to the (2S)-2-hydroxy-3-oxobutyl phosphate binding site.

This sequence belongs to the DMRL synthase family.

It carries out the reaction (2S)-2-hydroxy-3-oxobutyl phosphate + 5-amino-6-(D-ribitylamino)uracil = 6,7-dimethyl-8-(1-D-ribityl)lumazine + phosphate + 2 H2O + H(+). It participates in cofactor biosynthesis; riboflavin biosynthesis; riboflavin from 2-hydroxy-3-oxobutyl phosphate and 5-amino-6-(D-ribitylamino)uracil: step 1/2. In terms of biological role, catalyzes the formation of 6,7-dimethyl-8-ribityllumazine by condensation of 5-amino-6-(D-ribitylamino)uracil with 3,4-dihydroxy-2-butanone 4-phosphate. This is the penultimate step in the biosynthesis of riboflavin. This chain is 6,7-dimethyl-8-ribityllumazine synthase, found in Paraburkholderia phytofirmans (strain DSM 17436 / LMG 22146 / PsJN) (Burkholderia phytofirmans).